Consider the following 394-residue polypeptide: Formate-dependent phosphoribosylglycinamide formyltransferase (394 aa).

N(1)-(5-phospho-beta-D-ribosyl)glycinamide contacts are provided by residues glutamate 22–leucine 23 and glutamate 82. Residues arginine 114, lysine 155, serine 160–glutamine 165, glutamate 195–valine 198, and glutamate 203 each bind ATP. In terms of domain architecture, ATP-grasp spans arginine 119 to leucine 308. Mg(2+) contacts are provided by glutamate 267 and glutamate 279. N(1)-(5-phospho-beta-D-ribosyl)glycinamide-binding positions include aspartate 286, lysine 357, and arginine 364 to arginine 365.

It belongs to the PurK/PurT family. As to quaternary structure, homodimer.

It catalyses the reaction N(1)-(5-phospho-beta-D-ribosyl)glycinamide + formate + ATP = N(2)-formyl-N(1)-(5-phospho-beta-D-ribosyl)glycinamide + ADP + phosphate + H(+). Its pathway is purine metabolism; IMP biosynthesis via de novo pathway; N(2)-formyl-N(1)-(5-phospho-D-ribosyl)glycinamide from N(1)-(5-phospho-D-ribosyl)glycinamide (formate route): step 1/1. Its function is as follows. Involved in the de novo purine biosynthesis. Catalyzes the transfer of formate to 5-phospho-ribosyl-glycinamide (GAR), producing 5-phospho-ribosyl-N-formylglycinamide (FGAR). Formate is provided by PurU via hydrolysis of 10-formyl-tetrahydrofolate. In Tolumonas auensis (strain DSM 9187 / NBRC 110442 / TA 4), this protein is Formate-dependent phosphoribosylglycinamide formyltransferase.